The following is a 327-amino-acid chain: MTHPVTPKNTTRPTPANKPAASTLHPRNPHQGRYDFDKLIKALPELEKHAITNPSGEATINFSDADAVLTLNKALLAHHYNIKYWDLPKGYLCPPIPGRADYIHQVADLLNNNNSGSENKKPHVLDIGTGASLIYPIIGSQSYGWYFTATDIDPVSINTAKAICEINPNLKKLVTVKQQKNPKNIFKGIIGEHDYFDITVCNPPFHGSMQDVLDANNRKQSKLQKNRARRNPNGQANKFADAKNNLNFGGQNAELWTEGGEFSFISRMINESVGYAQQVNWFTTLVSRAENLKPLDALLRKVGARQIKTINMQHGQKASRILAWRFK.

A disordered region spans residues methionine 1–glutamine 31.

The protein belongs to the methyltransferase superfamily. METTL16/RlmF family.

Its subcellular location is the cytoplasm. It carries out the reaction adenosine(1618) in 23S rRNA + S-adenosyl-L-methionine = N(6)-methyladenosine(1618) in 23S rRNA + S-adenosyl-L-homocysteine + H(+). In terms of biological role, specifically methylates the adenine in position 1618 of 23S rRNA. The sequence is that of Ribosomal RNA large subunit methyltransferase F from Psychrobacter sp. (strain PRwf-1).